The primary structure comprises 341 residues: L-threonine 3-dehydrogenase (341 aa).

Cys38 is a Zn(2+) binding site. Catalysis depends on charge relay system residues Thr40 and His43. Positions 63, 64, 93, 96, 99, and 107 each coordinate Zn(2+). NAD(+) contacts are provided by residues Ile175, Asp195, Arg200, 262 to 264, and 286 to 287; these read LGI and IY.

Belongs to the zinc-containing alcohol dehydrogenase family. As to quaternary structure, homotetramer. It depends on Zn(2+) as a cofactor.

It localises to the cytoplasm. It catalyses the reaction L-threonine + NAD(+) = (2S)-2-amino-3-oxobutanoate + NADH + H(+). Its pathway is amino-acid degradation; L-threonine degradation via oxydo-reductase pathway; glycine from L-threonine: step 1/2. Functionally, catalyzes the NAD(+)-dependent oxidation of L-threonine to 2-amino-3-ketobutyrate. The sequence is that of L-threonine 3-dehydrogenase from Shigella sonnei (strain Ss046).